The primary structure comprises 156 residues: Small ribosomal subunit protein uS7 (156 aa).

It belongs to the universal ribosomal protein uS7 family. Part of the 30S ribosomal subunit. Contacts proteins S9 and S11.

Functionally, one of the primary rRNA binding proteins, it binds directly to 16S rRNA where it nucleates assembly of the head domain of the 30S subunit. Is located at the subunit interface close to the decoding center, probably blocks exit of the E-site tRNA. The protein is Small ribosomal subunit protein uS7 of Aeromonas salmonicida (strain A449).